A 226-amino-acid polypeptide reads, in one-letter code: UPF0173 metal-dependent hydrolase GFO_2312 (226 aa).

Belongs to the UPF0173 family.

In Christiangramia forsetii (strain DSM 17595 / CGMCC 1.15422 / KT0803) (Gramella forsetii), this protein is UPF0173 metal-dependent hydrolase GFO_2312.